We begin with the raw amino-acid sequence, 231 residues long: Ribonuclease 3 (231 aa).

The 130-residue stretch at 5 to 134 (QKKLKNDYGL…FLGALFIDQG (130 aa)) folds into the RNase III domain. Glutamate 47 contributes to the Mg(2+) binding site. Residue aspartate 51 is part of the active site. Positions 120 and 123 each coordinate Mg(2+). Glutamate 123 is a catalytic residue. Residues 160–229 (DYKTELQEVL…AENAIKGQNH (70 aa)) enclose the DRBM domain.

The protein belongs to the ribonuclease III family. As to quaternary structure, homodimer. It depends on Mg(2+) as a cofactor.

It localises to the cytoplasm. The enzyme catalyses Endonucleolytic cleavage to 5'-phosphomonoester.. Its function is as follows. Digests double-stranded RNA. Involved in the processing of primary rRNA transcript to yield the immediate precursors to the large and small rRNAs (23S and 16S). Processes some mRNAs, and tRNAs when they are encoded in the rRNA operon. Processes pre-crRNA and tracrRNA of type II CRISPR loci if present in the organism. The chain is Ribonuclease 3 from Lactococcus lactis subsp. lactis (strain IL1403) (Streptococcus lactis).